Reading from the N-terminus, the 638-residue chain is Threonine--tRNA ligase (638 aa).

A TGS domain is found at 1–61; it reads MPIITLPDGS…NSDSKVVIIT (61 aa). The tract at residues 242–533 is catalytic; it reads DHRKLGKKHS…LIEQYEAKFP (292 aa). Residues Cys-333, His-384, and His-510 each contribute to the Zn(2+) site.

This sequence belongs to the class-II aminoacyl-tRNA synthetase family. As to quaternary structure, homodimer. Zn(2+) is required as a cofactor.

It is found in the cytoplasm. It catalyses the reaction tRNA(Thr) + L-threonine + ATP = L-threonyl-tRNA(Thr) + AMP + diphosphate + H(+). Catalyzes the attachment of threonine to tRNA(Thr) in a two-step reaction: L-threonine is first activated by ATP to form Thr-AMP and then transferred to the acceptor end of tRNA(Thr). Also edits incorrectly charged L-seryl-tRNA(Thr). This chain is Threonine--tRNA ligase, found in Prochlorococcus marinus (strain MIT 9215).